Here is a 499-residue protein sequence, read N- to C-terminus: Glycerol kinase (499 aa).

Residue Thr-13 participates in ADP binding. 3 residues coordinate ATP: Thr-13, Thr-14, and Ser-15. Thr-13 is a sn-glycerol 3-phosphate binding site. Arg-17 serves as a coordination point for ADP. Residues Arg-83, Glu-84, Tyr-135, and Asp-244 each contribute to the sn-glycerol 3-phosphate site. Glycerol contacts are provided by Arg-83, Glu-84, Tyr-135, Asp-244, and Gln-245. Residues Thr-266 and Gly-309 each contribute to the ADP site. Positions 266, 309, 313, and 410 each coordinate ATP. Residues Gly-410 and Asn-414 each coordinate ADP.

Belongs to the FGGY kinase family.

It carries out the reaction glycerol + ATP = sn-glycerol 3-phosphate + ADP + H(+). Its pathway is polyol metabolism; glycerol degradation via glycerol kinase pathway; sn-glycerol 3-phosphate from glycerol: step 1/1. Inhibited by fructose 1,6-bisphosphate (FBP). Functionally, key enzyme in the regulation of glycerol uptake and metabolism. Catalyzes the phosphorylation of glycerol to yield sn-glycerol 3-phosphate. This chain is Glycerol kinase, found in Paraburkholderia phytofirmans (strain DSM 17436 / LMG 22146 / PsJN) (Burkholderia phytofirmans).